Reading from the N-terminus, the 666-residue chain is Chaperone protein HtpG (666 aa).

The interval 1 to 374 is a; substrate-binding; that stretch reads MSELNPVDNQ…SADLPLNVSR (374 aa). Positions 375 to 593 are b; sequence ELLQESRDVK…EGELSPQMIQ (219 aa). The c stretch occupies residues 594–666; the sequence is MLKQMGQDVP…LRRVNELLMR (73 aa).

It belongs to the heat shock protein 90 family. Homodimer.

It is found in the cytoplasm. In terms of biological role, molecular chaperone. Has ATPase activity. The chain is Chaperone protein HtpG from Psychrobacter cryohalolentis (strain ATCC BAA-1226 / DSM 17306 / VKM B-2378 / K5).